We begin with the raw amino-acid sequence, 514 residues long: 1-pyrroline-5-carboxylate dehydrogenase (514 aa).

Active-site residues include Glu286 and Cys320.

It belongs to the aldehyde dehydrogenase family. RocA subfamily.

It carries out the reaction L-glutamate 5-semialdehyde + NAD(+) + H2O = L-glutamate + NADH + 2 H(+). The protein operates within amino-acid degradation; L-proline degradation into L-glutamate; L-glutamate from L-proline: step 2/2. The chain is 1-pyrroline-5-carboxylate dehydrogenase from Staphylococcus epidermidis (strain ATCC 12228 / FDA PCI 1200).